The primary structure comprises 459 residues: Elongation factor 1-alpha (459 aa).

Glycine 2 is subject to N,N,N-trimethylglycine. N6,N6-dimethyllysine; alternate is present on lysine 3. Lysine 3 is modified (N6-methyllysine; alternate). In terms of domain architecture, tr-type G spans 5–240 (KTHVNVVVIG…DAVDPPTRPS (236 aa)). The segment at 14–21 (GHVDSGKS) is G1. 14–21 (GHVDSGKS) provides a ligand contact to GTP. An N6-methyllysine modification is found at lysine 30. The segment at 70-74 (VITID) is G2. An N6,N6,N6-trimethyllysine modification is found at lysine 79. The interval 91-94 (DAPG) is G3. GTP-binding positions include 91–95 (DAPGH) and 153–156 (NKMD). Residues 153–156 (NKMD) form a G4 region. The G5 stretch occupies residues 192-194 (SGW). Lysine 316 is modified (N6,N6-dimethyllysine; alternate). Position 316 is an N6-methyllysine; alternate (lysine 316). Residue lysine 390 is modified to N6-methyllysine.

This sequence belongs to the TRAFAC class translation factor GTPase superfamily. Classic translation factor GTPase family. EF-Tu/EF-1A subfamily.

It localises to the cytoplasm. This protein promotes the GTP-dependent binding of aminoacyl-tRNA to the A-site of ribosomes during protein biosynthesis. The protein is Elongation factor 1-alpha (TEF) of Blastobotrys adeninivorans (Yeast).